Here is a 427-residue protein sequence, read N- to C-terminus: Serine--tRNA ligase (427 aa).

231–233 (TAE) serves as a coordination point for L-serine. 262–264 (RSE) serves as a coordination point for ATP. Glu285 provides a ligand contact to L-serine. Residue 349–352 (EISS) participates in ATP binding. An L-serine-binding site is contributed by Ser385.

Belongs to the class-II aminoacyl-tRNA synthetase family. Type-1 seryl-tRNA synthetase subfamily. As to quaternary structure, homodimer. The tRNA molecule binds across the dimer.

The protein resides in the cytoplasm. It carries out the reaction tRNA(Ser) + L-serine + ATP = L-seryl-tRNA(Ser) + AMP + diphosphate + H(+). It catalyses the reaction tRNA(Sec) + L-serine + ATP = L-seryl-tRNA(Sec) + AMP + diphosphate + H(+). Its pathway is aminoacyl-tRNA biosynthesis; selenocysteinyl-tRNA(Sec) biosynthesis; L-seryl-tRNA(Sec) from L-serine and tRNA(Sec): step 1/1. Functionally, catalyzes the attachment of serine to tRNA(Ser). Is also able to aminoacylate tRNA(Sec) with serine, to form the misacylated tRNA L-seryl-tRNA(Sec), which will be further converted into selenocysteinyl-tRNA(Sec). This is Serine--tRNA ligase from Rhizobium rhizogenes (strain K84 / ATCC BAA-868) (Agrobacterium radiobacter).